The sequence spans 311 residues: Ribosomal RNA small subunit methyltransferase H (311 aa).

Residues 33-35 (GGH), Asp51, Phe78, Asp99, and Gln106 each bind S-adenosyl-L-methionine. Residues 289-311 (EEIEKNRRAHSAKLRAAEKLSFA) form a disordered region.

The protein belongs to the methyltransferase superfamily. RsmH family.

Its subcellular location is the cytoplasm. The enzyme catalyses cytidine(1402) in 16S rRNA + S-adenosyl-L-methionine = N(4)-methylcytidine(1402) in 16S rRNA + S-adenosyl-L-homocysteine + H(+). In terms of biological role, specifically methylates the N4 position of cytidine in position 1402 (C1402) of 16S rRNA. This chain is Ribosomal RNA small subunit methyltransferase H, found in Carboxydothermus hydrogenoformans (strain ATCC BAA-161 / DSM 6008 / Z-2901).